The chain runs to 193 residues: MSGMTEVSSLTGRLLVATPALADPNFERAVVLLLDHDEEGSLGVVLNRPTPVDVGDILEDWADLAGEPGVVFQGGPVSLDSALGVAVVPGGASGERAPLGWRRVHGAIGLVDLEAPPELLAPAVGALRIFAGYAGWGPGQLEDELTEGAWYVVESEPGDVSSPFPERLWREVLRRQRGDLAMVATYPDDPSLN.

This sequence belongs to the UPF0301 (AlgH) family.

The protein is UPF0301 protein SCO2948 of Streptomyces coelicolor (strain ATCC BAA-471 / A3(2) / M145).